Consider the following 373-residue polypeptide: Phospho-N-acetylmuramoyl-pentapeptide-transferase (373 aa).

Helical transmembrane passes span 28-48 (LLTVITSLAFSIILGPRTIAY), 72-92 (TPTMGGVLILTSIGFSTLCWA), 94-114 (LANPYVWILMVVMVIFGAVGW), 135-155 (YFWLSVGALFVGSSLYYIASQ), 177-197 (IVPLSALPLGLGFIIFTYFVI), 212-232 (GLAILPVVFVAAGLGVFSYVS), 252-272 (VTIVCAAMIGSGLGFLWYNAH), 276-296 (VFMGDVGALALGAMLGTIAVM), 301-321 (IAFAIMGGLFVAEALSVILQV), and 350-370 (QVVVRFWIIAILLVVLGLMTL).

The protein belongs to the glycosyltransferase 4 family. MraY subfamily. Mg(2+) is required as a cofactor.

The protein localises to the cell inner membrane. It carries out the reaction UDP-N-acetyl-alpha-D-muramoyl-L-alanyl-gamma-D-glutamyl-meso-2,6-diaminopimeloyl-D-alanyl-D-alanine + di-trans,octa-cis-undecaprenyl phosphate = di-trans,octa-cis-undecaprenyl diphospho-N-acetyl-alpha-D-muramoyl-L-alanyl-D-glutamyl-meso-2,6-diaminopimeloyl-D-alanyl-D-alanine + UMP. The protein operates within cell wall biogenesis; peptidoglycan biosynthesis. In terms of biological role, catalyzes the initial step of the lipid cycle reactions in the biosynthesis of the cell wall peptidoglycan: transfers peptidoglycan precursor phospho-MurNAc-pentapeptide from UDP-MurNAc-pentapeptide onto the lipid carrier undecaprenyl phosphate, yielding undecaprenyl-pyrophosphoryl-MurNAc-pentapeptide, known as lipid I. The sequence is that of Phospho-N-acetylmuramoyl-pentapeptide-transferase from Psychrobacter sp. (strain PRwf-1).